We begin with the raw amino-acid sequence, 137 residues long: Golgin subfamily A member 7 (137 aa).

S-palmitoyl cysteine attachment occurs at residues Cys-69 and Cys-72.

This sequence belongs to the ERF4 family. Interacts with GOLGA3. Interacts with ZDHHC9. In terms of processing, palmitoylated on Cys-69 and Cys-72; which is required for Golgi localization and interaction with GOLGA3.

The protein resides in the golgi apparatus membrane. Functionally, may be involved in protein transport from Golgi to cell surface. The ZDHHC9-GOLGA7 complex is a palmitoyltransferase specific for HRAS and NRAS. The chain is Golgin subfamily A member 7 (Golga7) from Rattus norvegicus (Rat).